The following is a 489-amino-acid chain: Cysteine--tRNA ligase (489 aa).

Zn(2+) is bound at residue Cys-27. The 'HIGH' region signature appears at 29–39 (VTVYDLCHLGH). Cys-211, His-236, and Glu-240 together coordinate Zn(2+). The short motif at 268–272 (KMSKS) is the 'KMSKS' region element. An ATP-binding site is contributed by Lys-271.

It belongs to the class-I aminoacyl-tRNA synthetase family. As to quaternary structure, monomer. Zn(2+) serves as cofactor.

It is found in the cytoplasm. It carries out the reaction tRNA(Cys) + L-cysteine + ATP = L-cysteinyl-tRNA(Cys) + AMP + diphosphate. In Prochlorococcus marinus (strain MIT 9215), this protein is Cysteine--tRNA ligase.